Reading from the N-terminus, the 367-residue chain is Sulfate/thiosulfate import ATP-binding protein CysA 2 (367 aa).

The ABC transporter domain maps to 3 to 237 (VRVQNIRKEF…PVSPFVYGFI (235 aa)). Position 35–42 (35–42 (GPSGSGKT)) interacts with ATP.

The protein belongs to the ABC transporter superfamily. Sulfate/tungstate importer (TC 3.A.1.6) family. In terms of assembly, the complex is composed of two ATP-binding proteins (CysA), two transmembrane proteins (CysT and CysW) and a solute-binding protein (CysP).

Its subcellular location is the cell inner membrane. The enzyme catalyses sulfate(out) + ATP + H2O = sulfate(in) + ADP + phosphate + H(+). It catalyses the reaction thiosulfate(out) + ATP + H2O = thiosulfate(in) + ADP + phosphate + H(+). In terms of biological role, part of the ABC transporter complex CysAWTP involved in sulfate/thiosulfate import. Responsible for energy coupling to the transport system. This Rhizobium meliloti (strain 1021) (Ensifer meliloti) protein is Sulfate/thiosulfate import ATP-binding protein CysA 2.